Consider the following 396-residue polypeptide: Na(+)/H(+) antiporter NhaA 1 (396 aa).

11 helical membrane passes run Ala-15–Leu-35, Leu-60–Leu-80, Phe-96–Ile-116, Gly-126–Gly-146, Ile-155–Phe-175, Ala-179–Cys-199, Ile-207–Ala-227, Ser-255–Val-275, Pro-290–Leu-312, Leu-329–Leu-349, and Leu-363–Val-383.

This sequence belongs to the NhaA Na(+)/H(+) (TC 2.A.33) antiporter family.

It localises to the cell inner membrane. It carries out the reaction Na(+)(in) + 2 H(+)(out) = Na(+)(out) + 2 H(+)(in). Its function is as follows. Na(+)/H(+) antiporter that extrudes sodium in exchange for external protons. This Campylobacter hominis (strain ATCC BAA-381 / DSM 21671 / CCUG 45161 / LMG 19568 / NCTC 13146 / CH001A) protein is Na(+)/H(+) antiporter NhaA 1.